A 381-amino-acid polypeptide reads, in one-letter code: Heme A synthase (381 aa).

5 helical membrane-spanning segments follow: residues 25–45 (GAVR…VAVG), 112–132 (LLGR…WWRG), 138–158 (LLLG…IGWI), 176–196 (LALH…LAAG), and 212–232 (VAGL…LVAG). Residue H277 coordinates heme. Helical transmembrane passes span 279-299 (LFAY…VRMA), 307-327 (AMGV…TLLL), and 329-349 (VPLW…IMAT). H337 contacts heme.

Belongs to the COX15/CtaA family. Type 2 subfamily. As to quaternary structure, interacts with CtaB. The cofactor is heme b.

It localises to the cell membrane. It carries out the reaction Fe(II)-heme o + 2 A + H2O = Fe(II)-heme a + 2 AH2. It functions in the pathway porphyrin-containing compound metabolism; heme A biosynthesis; heme A from heme O: step 1/1. In terms of biological role, catalyzes the conversion of heme O to heme A by two successive hydroxylations of the methyl group at C8. The first hydroxylation forms heme I, the second hydroxylation results in an unstable dihydroxymethyl group, which spontaneously dehydrates, resulting in the formyl group of heme A. The protein is Heme A synthase of Methylorubrum populi (strain ATCC BAA-705 / NCIMB 13946 / BJ001) (Methylobacterium populi).